The following is a 117-amino-acid chain: Peptidyl-tRNA hydrolase (117 aa).

The protein belongs to the PTH2 family.

Its subcellular location is the cytoplasm. The catalysed reaction is an N-acyl-L-alpha-aminoacyl-tRNA + H2O = an N-acyl-L-amino acid + a tRNA + H(+). In terms of biological role, the natural substrate for this enzyme may be peptidyl-tRNAs which drop off the ribosome during protein synthesis. This is Peptidyl-tRNA hydrolase from Thermoplasma volcanium (strain ATCC 51530 / DSM 4299 / JCM 9571 / NBRC 15438 / GSS1).